A 326-amino-acid chain; its full sequence is Transmembrane protein 171 (326 aa).

4 helical membrane passes run 22 to 42, 57 to 77, 114 to 134, and 161 to 181; these read IFFL…LSIF, MMLK…VILA, LIFG…GIWV, and FLSL…FFVV. A disordered region spans residues 229 to 326; sequence FPESSASAAA…LSPSSEPSPP (98 aa). The span at 230-240 shows a compositional bias: low complexity; it reads PESSASAAARS. Residues 257–266 show a composition bias toward polar residues; the sequence is SIFQSGSPTP. Composition is skewed to low complexity over residues 288–302 and 312–326; these read SSSE…LSEL and ATTT…PSPP.

The protein localises to the membrane. The polypeptide is Transmembrane protein 171 (TMEM171) (Bos taurus (Bovine)).